We begin with the raw amino-acid sequence, 449 residues long: Capsid protein (449 aa).

The segment at 1-43 (MARRARRPRGRFYSFRRGRWHHLKRLRRRYKFRHRRRQRYRRR) is DNA-binding. The tract at residues 6 to 47 (RRPRGRFYSFRRGRWHHLKRLRRRYKFRHRRRQRYRRRAFRK) is nuclear localization signals.

It belongs to the gyrovirus capsid protein family. As to quaternary structure, homomultimer (Potential). Interacts with Rep; this interaction relocates Rep into the nucleus.

Its subcellular location is the host nucleus. It is found in the virion. Self-assembles to form the virion icosahedral capsid with a T=1 symmetry. This very small capsid (25 nm in diameter) allows the virus to be very stable in the environment and resistant to some disinfectants, including detergents. Essential for the initial attachment to host receptors. After attachment, the virus is endocytosed and traffics to the nucleus. The capsid protein binds and transports the viral genome and Rep across the nuclear envelope. This chain is Capsid protein (VP1), found in Gallus gallus (Chicken).